A 395-amino-acid polypeptide reads, in one-letter code: Transcription termination/antitermination protein NusA (395 aa).

Positions 137 to 201 constitute an S1 motif domain; it reads NSVLMGQVIL…TKKGLLLELS (65 aa). KH domains are found at residues 243-291 and 331-378; these read SHNS…TLAL and KVRL…NENE.

Belongs to the NusA family. Monomer. Binds directly to the core enzyme of the DNA-dependent RNA polymerase and to nascent RNA.

It is found in the cytoplasm. Functionally, participates in both transcription termination and antitermination. The sequence is that of Transcription termination/antitermination protein NusA from Helicobacter pylori (strain J99 / ATCC 700824) (Campylobacter pylori J99).